The primary structure comprises 436 residues: Testican-3 (436 aa).

Positions 1 to 22 (MLKVSAVLCVCAAAWCSQSLAA) are cleaved as a signal peptide. Disulfide bonds link cysteine 90-cysteine 101, cysteine 95-cysteine 111, cysteine 139-cysteine 169, cysteine 142-cysteine 162, cysteine 151-cysteine 183, cysteine 317-cysteine 341, cysteine 352-cysteine 359, and cysteine 361-cysteine 380. Residues 133 to 185 (GPILSTCKQCPVVYPSPVCGSDGHTYSFQCKLEYQACVLGKQISVKCEGHCPC) form the Kazal-like domain. The region spanning 314–380 (DPPCQTELSN…GSRINGVADC (67 aa)) is the Thyroglobulin type-1 domain. 2 O-linked (Xyl...) (glycosaminoglycan) serine glycosylation sites follow: serine 387 and serine 392. Residues 393 to 436 (GDFHEWTDDEDDEDDIMNDEDEIEDDDEDEGDDDDGGDDHDGYI) are disordered. Positions 399-430 (TDDEDDEDDIMNDEDEIEDDDEDEGDDDDGGD) are enriched in acidic residues.

Post-translationally, contains chondroitin sulfate and heparan sulfate O-linked oligosaccharides. Expressed in brain.

The protein resides in the secreted. It localises to the extracellular space. Its subcellular location is the extracellular matrix. Its function is as follows. May participate in diverse steps of neurogenesis. Inhibits the processing of pro-matrix metalloproteinase 2 (MMP-2) by MT1-MMP and MT3-MMP. May interfere with tumor invasion. This Pongo abelii (Sumatran orangutan) protein is Testican-3 (SPOCK3).